Here is a 530-residue protein sequence, read N- to C-terminus: Autoinducer-2 kinase (530 aa).

Belongs to the FGGY kinase family.

Its subcellular location is the cytoplasm. It carries out the reaction (S)-4,5-dihydroxypentane-2,3-dione + ATP = (2S)-2-hydroxy-3,4-dioxopentyl phosphate + ADP + H(+). Functionally, catalyzes the phosphorylation of autoinducer-2 (AI-2) to phospho-AI-2, which subsequently inactivates the transcriptional regulator LsrR and leads to the transcription of the lsr operon. Phosphorylates the ring-open form of (S)-4,5-dihydroxypentane-2,3-dione (DPD), which is the precursor to all AI-2 signaling molecules, at the C5 position. The protein is Autoinducer-2 kinase of Photorhabdus laumondii subsp. laumondii (strain DSM 15139 / CIP 105565 / TT01) (Photorhabdus luminescens subsp. laumondii).